A 147-amino-acid polypeptide reads, in one-letter code: 3-dehydroquinate dehydratase (147 aa).

Tyrosine 24 acts as the Proton acceptor in catalysis. Substrate-binding residues include asparagine 75, histidine 81, and aspartate 88. Histidine 101 serves as the catalytic Proton donor. Residues 102 to 103 and arginine 112 each bind substrate; that span reads IS.

It belongs to the type-II 3-dehydroquinase family. As to quaternary structure, homododecamer.

The enzyme catalyses 3-dehydroquinate = 3-dehydroshikimate + H2O. Its pathway is metabolic intermediate biosynthesis; chorismate biosynthesis; chorismate from D-erythrose 4-phosphate and phosphoenolpyruvate: step 3/7. Functionally, catalyzes a trans-dehydration via an enolate intermediate. The sequence is that of 3-dehydroquinate dehydratase from Cereibacter sphaeroides (strain KD131 / KCTC 12085) (Rhodobacter sphaeroides).